Consider the following 890-residue polypeptide: DNA mismatch repair protein MutS (890 aa).

Position 607 to 614 (607 to 614) interacts with ATP; sequence GPNMSGKS.

The protein belongs to the DNA mismatch repair MutS family.

Functionally, this protein is involved in the repair of mismatches in DNA. It is possible that it carries out the mismatch recognition step. This protein has a weak ATPase activity. In Bacillus thuringiensis subsp. konkukian (strain 97-27), this protein is DNA mismatch repair protein MutS.